Consider the following 483-residue polypeptide: NADH-quinone oxidoreductase subunit N (483 aa).

The next 13 membrane-spanning stretches (helical) occupy residues 11–31 (ALPE…DLFL), 37–57 (SLIY…TACT), 82–100 (LMMY…QYVS), 110–130 (FALT…QHFL), 164–184 (FVLG…LYGV), 205–225 (AVLV…LGAV), 239–259 (PTAV…AFMI), 268–288 (VLAI…ILIG), 301–321 (MLAY…MSAG), 329–349 (MFYI…MLLL), 372–392 (YAFL…TLGF), 406–426 (GFVG…FYYL), and 446–466 (PIDM…LGMF).

This sequence belongs to the complex I subunit 2 family. In terms of assembly, NDH-1 is composed of 14 different subunits. Subunits NuoA, H, J, K, L, M, N constitute the membrane sector of the complex.

It is found in the cell inner membrane. The catalysed reaction is a quinone + NADH + 5 H(+)(in) = a quinol + NAD(+) + 4 H(+)(out). In terms of biological role, NDH-1 shuttles electrons from NADH, via FMN and iron-sulfur (Fe-S) centers, to quinones in the respiratory chain. The immediate electron acceptor for the enzyme in this species is believed to be ubiquinone. Couples the redox reaction to proton translocation (for every two electrons transferred, four hydrogen ions are translocated across the cytoplasmic membrane), and thus conserves the redox energy in a proton gradient. This chain is NADH-quinone oxidoreductase subunit N, found in Methylovorus glucosotrophus (strain SIP3-4).